Here is a 144-residue protein sequence, read N- to C-terminus: Large ribosomal subunit protein uL15 (144 aa).

The interval 1 to 49 is disordered; sequence MIKLECLQDPSPRKRRTKLLGRGPSSGHGKTSSRGHKGDCSRSGYKRRF.

The protein belongs to the universal ribosomal protein uL15 family. In terms of assembly, part of the 50S ribosomal subunit.

In terms of biological role, binds to the 23S rRNA. The sequence is that of Large ribosomal subunit protein uL15 from Chlamydia trachomatis serovar A (strain ATCC VR-571B / DSM 19440 / HAR-13).